We begin with the raw amino-acid sequence, 96 residues long: Small ribosomal subunit protein bS6 (96 aa).

It belongs to the bacterial ribosomal protein bS6 family.

Its function is as follows. Binds together with bS18 to 16S ribosomal RNA. The protein is Small ribosomal subunit protein bS6 of Thermobifida fusca (strain YX).